The following is a 434-amino-acid chain: ATP-dependent protease ATPase subunit HslU (434 aa).

Residues Ile-18, 60–65, Asp-247, Glu-312, and Arg-384 each bind ATP; that span reads GVGKTE.

Belongs to the ClpX chaperone family. HslU subfamily. A double ring-shaped homohexamer of HslV is capped on each side by a ring-shaped HslU homohexamer. The assembly of the HslU/HslV complex is dependent on binding of ATP.

The protein localises to the cytoplasm. Its function is as follows. ATPase subunit of a proteasome-like degradation complex; this subunit has chaperone activity. The binding of ATP and its subsequent hydrolysis by HslU are essential for unfolding of protein substrates subsequently hydrolyzed by HslV. HslU recognizes the N-terminal part of its protein substrates and unfolds these before they are guided to HslV for hydrolysis. This is ATP-dependent protease ATPase subunit HslU from Sinorhizobium fredii (strain NBRC 101917 / NGR234).